The sequence spans 376 residues: Protein-glutamate methylesterase/protein-glutamine glutaminase 1 (376 aa).

A Response regulatory domain is found at 4–121 (KVLVVDDSSF…ARNRDEAVSL (118 aa)). Aspartate 55 carries the post-translational modification 4-aspartylphosphate. Positions 138–169 (RPVASSTPVQERPQSTLNRPTTGLRREASAQA) are disordered. Over residues 141–158 (ASSTPVQERPQSTLNRPT) the composition is skewed to polar residues. The CheB-type methylesterase domain maps to 183–376 (SGKKYQLTAI…ERMLVEVGLA (194 aa)). Catalysis depends on residues serine 195, histidine 222, and aspartate 318.

It belongs to the CheB family. Post-translationally, phosphorylated by CheA. Phosphorylation of the N-terminal regulatory domain activates the methylesterase activity.

It is found in the cytoplasm. The enzyme catalyses [protein]-L-glutamate 5-O-methyl ester + H2O = L-glutamyl-[protein] + methanol + H(+). It catalyses the reaction L-glutaminyl-[protein] + H2O = L-glutamyl-[protein] + NH4(+). Its function is as follows. Involved in chemotaxis. Part of a chemotaxis signal transduction system that modulates chemotaxis in response to various stimuli. Catalyzes the demethylation of specific methylglutamate residues introduced into the chemoreceptors (methyl-accepting chemotaxis proteins or MCP) by CheR. Also mediates the irreversible deamidation of specific glutamine residues to glutamic acid. The polypeptide is Protein-glutamate methylesterase/protein-glutamine glutaminase 1 (Vibrio vulnificus (strain YJ016)).